We begin with the raw amino-acid sequence, 335 residues long: Biotin synthase (335 aa).

The Radical SAM core domain occupies 43 to 269 (YFGKKVKLNM…INPTKEIRIA (227 aa)). Residues Cys61, Cys65, and Cys68 each coordinate [4Fe-4S] cluster. Positions 104, 137, 197, and 267 each coordinate [2Fe-2S] cluster.

The protein belongs to the radical SAM superfamily. Biotin synthase family. Homodimer. Requires [4Fe-4S] cluster as cofactor. It depends on [2Fe-2S] cluster as a cofactor.

The catalysed reaction is (4R,5S)-dethiobiotin + (sulfur carrier)-SH + 2 reduced [2Fe-2S]-[ferredoxin] + 2 S-adenosyl-L-methionine = (sulfur carrier)-H + biotin + 2 5'-deoxyadenosine + 2 L-methionine + 2 oxidized [2Fe-2S]-[ferredoxin]. It participates in cofactor biosynthesis; biotin biosynthesis; biotin from 7,8-diaminononanoate: step 2/2. In terms of biological role, catalyzes the conversion of dethiobiotin (DTB) to biotin by the insertion of a sulfur atom into dethiobiotin via a radical-based mechanism. The polypeptide is Biotin synthase (Staphylococcus aureus (strain MSSA476)).